The following is a 158-amino-acid chain: UPF0303 protein SCO2848 (158 aa).

The protein belongs to the UPF0303 family.

This chain is UPF0303 protein SCO2848, found in Streptomyces coelicolor (strain ATCC BAA-471 / A3(2) / M145).